The chain runs to 478 residues: Ribulose bisphosphate carboxylase large chain (478 aa).

A propeptide spanning residues 1-2 is cleaved from the precursor; sequence MS. N123 and T173 together coordinate substrate. K175 functions as the Proton acceptor in the catalytic mechanism. K177 is a binding site for substrate. Residues K201, D203, and E204 each contribute to the Mg(2+) site. The residue at position 201 (K201) is an N6-carboxylysine. A Phosphoserine modification is found at S208. H294 acts as the Proton acceptor in catalysis. 2 residues coordinate substrate: R295 and H327. T330 carries the phosphothreonine modification. Position 379 (S379) interacts with substrate.

Belongs to the RuBisCO large chain family. Type I subfamily. Heterohexadecamer of 8 large chains and 8 small chains; disulfide-linked. The disulfide link is formed within the large subunit homodimers. Mg(2+) serves as cofactor. Post-translationally, the disulfide bond which can form in the large chain dimeric partners within the hexadecamer appears to be associated with oxidative stress and protein turnover.

It localises to the plastid. It is found in the chloroplast. The catalysed reaction is 2 (2R)-3-phosphoglycerate + 2 H(+) = D-ribulose 1,5-bisphosphate + CO2 + H2O. It carries out the reaction D-ribulose 1,5-bisphosphate + O2 = 2-phosphoglycolate + (2R)-3-phosphoglycerate + 2 H(+). In terms of biological role, ruBisCO catalyzes two reactions: the carboxylation of D-ribulose 1,5-bisphosphate, the primary event in carbon dioxide fixation, as well as the oxidative fragmentation of the pentose substrate in the photorespiration process. Both reactions occur simultaneously and in competition at the same active site. The polypeptide is Ribulose bisphosphate carboxylase large chain (Lepidium virginicum (Virginia pepperweed)).